The following is a 103-amino-acid chain: Small ribosomal subunit protein bS6c (103 aa).

The protein belongs to the bacterial ribosomal protein bS6 family.

It is found in the plastid. It localises to the chloroplast. In terms of biological role, binds together with bS18 to 16S ribosomal RNA. This is Small ribosomal subunit protein bS6c from Gracilaria tenuistipitata var. liui (Red alga).